The primary structure comprises 344 residues: N-acetyl-gamma-glutamyl-phosphate reductase (344 aa).

C150 is a catalytic residue.

It belongs to the NAGSA dehydrogenase family. Type 1 subfamily.

The protein resides in the cytoplasm. It carries out the reaction N-acetyl-L-glutamate 5-semialdehyde + phosphate + NADP(+) = N-acetyl-L-glutamyl 5-phosphate + NADPH + H(+). It participates in amino-acid biosynthesis; L-arginine biosynthesis; N(2)-acetyl-L-ornithine from L-glutamate: step 3/4. Its function is as follows. Catalyzes the NADPH-dependent reduction of N-acetyl-5-glutamyl phosphate to yield N-acetyl-L-glutamate 5-semialdehyde. In Pseudomonas aeruginosa (strain UCBPP-PA14), this protein is N-acetyl-gamma-glutamyl-phosphate reductase.